A 131-amino-acid polypeptide reads, in one-letter code: Large ribosomal subunit protein bL17 (131 aa).

This sequence belongs to the bacterial ribosomal protein bL17 family. In terms of assembly, part of the 50S ribosomal subunit. Contacts protein L32.

The chain is Large ribosomal subunit protein bL17 from Shewanella frigidimarina (strain NCIMB 400).